We begin with the raw amino-acid sequence, 299 residues long: Oxygen-dependent coproporphyrinogen-III oxidase (299 aa).

A substrate-binding site is contributed by Ser92. A divalent metal cation contacts are provided by His96 and His106. Catalysis depends on His106, which acts as the Proton donor. A substrate-binding site is contributed by Asn108–Arg110. Positions 145 and 175 each coordinate a divalent metal cation. The segment at Tyr240–Glu275 is important for dimerization. Gly258–Arg260 serves as a coordination point for substrate.

It belongs to the aerobic coproporphyrinogen-III oxidase family. Homodimer. A divalent metal cation serves as cofactor.

The protein resides in the cytoplasm. It carries out the reaction coproporphyrinogen III + O2 + 2 H(+) = protoporphyrinogen IX + 2 CO2 + 2 H2O. Its pathway is porphyrin-containing compound metabolism; protoporphyrin-IX biosynthesis; protoporphyrinogen-IX from coproporphyrinogen-III (O2 route): step 1/1. Involved in the heme biosynthesis. Catalyzes the aerobic oxidative decarboxylation of propionate groups of rings A and B of coproporphyrinogen-III to yield the vinyl groups in protoporphyrinogen-IX. The polypeptide is Oxygen-dependent coproporphyrinogen-III oxidase (Salmonella arizonae (strain ATCC BAA-731 / CDC346-86 / RSK2980)).